A 75-amino-acid chain; its full sequence is Brevinin-2ISc (75 aa).

The N-terminal stretch at 1-22 is a signal peptide; that stretch reads MFTLKKSLLLLFFLGTISLSLC. The propeptide at 23–40 is removed in mature form; it reads EEERDADEDEGEMTEEEV. Cys69 and Cys75 are disulfide-bonded.

Expressed by the skin glands.

Its subcellular location is the secreted. Functionally, has antimicrobial activity against Gram-negative bacterium E.coli ATCC 8739 (MIC=50 ug) and against Gram positive bacteria S.aureus ATCC 6538 (MIC=25 ug). Has no activity against methicillin-resistant S.aureus ATCC 43300, B.subtilis ATCC 6633 and against fungus C.albicans ATCC 90028. The sequence is that of Brevinin-2ISc from Odorrana ishikawae (Ishikawa's frog).